The sequence spans 321 residues: 1D-myo-inositol 2-acetamido-2-deoxy-alpha-D-glucopyranoside deacetylase (321 aa).

Residues H15, D18, and H150 each contribute to the Zn(2+) site. Positions 280-321 are disordered; that stretch reads PEGERESDLFAGLPPATDGTGAAGAPSATGAANPADAEGGAA. Over residues 290 to 321 the composition is skewed to low complexity; sequence AGLPPATDGTGAAGAPSATGAANPADAEGGAA.

Belongs to the MshB deacetylase family. It depends on Zn(2+) as a cofactor.

It carries out the reaction 1D-myo-inositol 2-acetamido-2-deoxy-alpha-D-glucopyranoside + H2O = 1D-myo-inositol 2-amino-2-deoxy-alpha-D-glucopyranoside + acetate. Functionally, catalyzes the deacetylation of 1D-myo-inositol 2-acetamido-2-deoxy-alpha-D-glucopyranoside (GlcNAc-Ins) in the mycothiol biosynthesis pathway. This chain is 1D-myo-inositol 2-acetamido-2-deoxy-alpha-D-glucopyranoside deacetylase, found in Streptomyces griseus subsp. griseus (strain JCM 4626 / CBS 651.72 / NBRC 13350 / KCC S-0626 / ISP 5235).